Here is a 497-residue protein sequence, read N- to C-terminus: Dihydrolipoyl dehydrogenase (497 aa).

FAD contacts are provided by residues 60 to 69, Lys78, Gly142, and 170 to 172; these read EKEPSLGGTC and TGS. Cys69 and Cys74 are oxidised to a cystine. NAD(+)-binding positions include 207-214, Glu230, Val264, and Gly302; that span reads GAGVIGLE. FAD contacts are provided by residues Asp343 and 349–352; that span reads MLAH. His475 acts as the Proton acceptor in catalysis.

This sequence belongs to the class-I pyridine nucleotide-disulfide oxidoreductase family. Homodimer. It depends on FAD as a cofactor.

The protein localises to the cytoplasm. The enzyme catalyses N(6)-[(R)-dihydrolipoyl]-L-lysyl-[protein] + NAD(+) = N(6)-[(R)-lipoyl]-L-lysyl-[protein] + NADH + H(+). The chain is Dihydrolipoyl dehydrogenase from Manduca sexta (Tobacco hawkmoth).